Consider the following 268-residue polypeptide: Glutamate racemase (268 aa).

Residues 13–14 and 45–46 each bind substrate; these read DS and YG. Cys77 (proton donor/acceptor) is an active-site residue. Residue 78–79 participates in substrate binding; it reads NT. Cys185 functions as the Proton donor/acceptor in the catalytic mechanism. Residue 186–187 coordinates substrate; sequence TH.

This sequence belongs to the aspartate/glutamate racemases family.

The enzyme catalyses L-glutamate = D-glutamate. Its pathway is cell wall biogenesis; peptidoglycan biosynthesis. Provides the (R)-glutamate required for cell wall biosynthesis. In Vibrio campbellii (strain ATCC BAA-1116), this protein is Glutamate racemase.